Consider the following 662-residue polypeptide: DNA ligase (662 aa).

NAD(+) contacts are provided by residues 34–38 (DYDYD), 83–84 (SI), and glutamate 113. Lysine 115 functions as the N6-AMP-lysine intermediate in the catalytic mechanism. NAD(+) is bound by residues arginine 136, glutamate 172, lysine 286, and lysine 310. Positions 404, 407, 422, and 427 each coordinate Zn(2+). The 80-residue stretch at 583 to 662 (RESSSCLGKT…NDLLKILYPN (80 aa)) folds into the BRCT domain.

This sequence belongs to the NAD-dependent DNA ligase family. LigA subfamily. The cofactor is Mg(2+). Requires Mn(2+) as cofactor.

It catalyses the reaction NAD(+) + (deoxyribonucleotide)n-3'-hydroxyl + 5'-phospho-(deoxyribonucleotide)m = (deoxyribonucleotide)n+m + AMP + beta-nicotinamide D-nucleotide.. DNA ligase that catalyzes the formation of phosphodiester linkages between 5'-phosphoryl and 3'-hydroxyl groups in double-stranded DNA using NAD as a coenzyme and as the energy source for the reaction. It is essential for DNA replication and repair of damaged DNA. This Chlamydia caviae (strain ATCC VR-813 / DSM 19441 / 03DC25 / GPIC) (Chlamydophila caviae) protein is DNA ligase.